Reading from the N-terminus, the 146-residue chain is VKWSDKERAVIISIFAGLDYEDIGPKALSRCLIVYPWTQRYFGSFGNLSTPAAIMGNPKIAAHGIKVLHGLDRGVKNMDNIKDAYTELSILHSETLHVDPDNFKLLADCLTIVVAAKMGCAFTPDTQLAFQKFLAVVVSALGKQYC.

The Globin domain maps to Lys-2–Cys-146. The heme b site is built by His-63 and His-92.

This sequence belongs to the globin family. As to quaternary structure, hb1 is a heterotetramer of two alpha-1 chains and two beta-1 chains; Hb2 is a heterotetramer of two alpha-2 chains and two beta-1 chains. As to expression, red blood cells.

In terms of biological role, involved in oxygen transport from gills to the various peripheral tissues. The polypeptide is Hemoglobin subunit beta-1 (hbb1) (Anarhichas minor (Arctic spotted wolffish)).